The primary structure comprises 1240 residues: Structural polyprotein (1240 aa).

The segment at 1–35 (MFPYPTLNYPPMAPINPMAYRDPNPPRQVAPFRPP) is necessary for nucleocapsid assembly and virus assembly. Residues 1-102 (MFPYPTLNYP…RKPKPGKRQR (102 aa)) are disordered. Pro residues predominate over residues 23–34 (PNPPRQVAPFRP). Positions 36 to 69 (LAAQIEDLRRSIANLTLKQRAPNPPAGPPAKRKK) are host transcription inhibition. Positions 43 to 50 (LRRSIANL) match the Supraphysiological nuclear export signal motif. An N-linked (GlcNAc...) asparagine; by host glycan is attached at Asn49. A compositionally biased stretch (basic residues) spans 65–102 (AKRKKPAPKPKPAQAKKKRPPPPAKKQKRKPKPGKRQR). Residues 66–70 (KRKKP) carry the Nuclear localization signal motif. Residues 82 to 112 (KRPPPPAKKQKRKPKPGKRQRMCMKLESDKT) are binding to the viral RNA. Positions 97 to 111 (PGKRQRMCMKLESDK) are ribosome-binding. Residue Ser109 is modified to Phosphoserine. One can recognise a Peptidase S3 domain in the interval 111 to 260 (KTFPIMLNGQ…KDTPEGSEPW (150 aa)). Thr112 is subject to Phosphothreonine. Catalysis depends on charge relay system residues His137, Asp159, and Ser211. A functions as an uncleaved signal peptide for the precursor of protein E3/E2 region spans residues 261–272 (SLATVMCVLANI). Residues 261-682 (SLATVMCVLA…HEVVVYYYNR (422 aa)) lie on the Extracellular side of the membrane. Asn271 and Asn638 each carry an N-linked (GlcNAc...) asparagine; by host glycan. Residues 683–703 (YPLTTIIGLCTCVAIIMVSCV) traverse the membrane as a helical segment. At 704-743 (HPCGSFAGLRNLCITPYKLAPNAQVPILLALLCCIKPTRA) the chain is on the cytoplasmic side. S-palmitoyl cysteine; by host attachment occurs at residues Cys706, Cys716, Cys736, and Cys737. Residues 715–735 (LCITPYKLAPNAQVPILLALL) form a transient transmembrane before p62-6K protein processing region. Residues 744–758 (DDTLQVLNYLWNNNQ) lie on the Extracellular side of the membrane. A helical transmembrane segment spans residues 759–779 (NFFWMQTLIPLAALIVCMRIV). A topological domain (cytoplasmic) is located at residue Arg780. Residues 781-801 (CLFCCGPAFLLVCGAWAAAYE) traverse the membrane as a helical segment. The Extracellular segment spans residues 802–1216 (HTAVMPNKVG…WSWLKVLVGG (415 aa)). A glycan (N-linked (GlcNAc...) asparagine; by host) is linked at Asn834. Intrachain disulfides connect Cys848-Cys913, Cys861-Cys893, Cys862-Cys895, and Cys867-Cys877. Residues 883–900 (VYPFMWGGAYCFCDTENT) are E1 fusion peptide loop. A glycan (N-linked (GlcNAc...) asparagine; by host) is linked at Asn933. Disulfide bonds link Cys1059–Cys1071, Cys1101–Cys1176, and Cys1106–Cys1180. Residues 1217–1237 (TSAFIVLGLIATAVVALVLFF) form a helical membrane-spanning segment. At 1238–1240 (HRH) the chain is on the cytoplasmic side.

In terms of assembly, part of a tetrameric complex composed of host CRM1, host importin alpha/beta dimer and the viral capsid; this complex blocks the receptor-mediated transport through the nuclear pore. Interacts with host phosphatase PPP1CA; this interaction dephosphorylates the capsid protein, which increases its ability to bind to the viral genome. Interacts with host karyopherin KPNA4; this interaction allows the nuclear import of the viral capsid protein. Interacts with spike glycoprotein E2. Interacts with host IRAK1; the interaction leads to inhibition of IRAK1-dependent signaling. As to quaternary structure, the precursor of protein E3/E2 and E1 form a heterodimer shortly after synthesis. The precursor of protein E3/E2 and E1 form a heterodimer shortly after synthesis. Processing of the precursor of protein E3/E2 into E2 and E3 results in a heterodimer of the spike glycoproteins E2 and E1. Spike at virion surface are constituted of three E2-E1 heterodimers. After target cell attachment and endocytosis, E1 change conformation to form homotrimers. Interacts with 6K protein. In terms of assembly, processing of the precursor of protein E3/E2 into E2 and E3 results in a heterodimer of the spike glycoproteins E2 and E1. Spike at virion surface are constituted of three E2-E1 heterodimers. Interacts with 6K protein. As to quaternary structure, interacts with spike glycoprotein E1. Interacts with spike glycoprotein E2. Post-translationally, structural polyprotein: Specific enzymatic cleavages in vivo yield mature proteins. Capsid protein is auto-cleaved during polyprotein translation, unmasking a signal peptide at the N-terminus of the precursor of E3/E2. The remaining polyprotein is then targeted to the host endoplasmic reticulum, where host signal peptidase cleaves it into pE2, 6K and E1 proteins. pE2 is further processed to mature E3 and E2 by host furin in trans-Golgi vesicle. Phosphorylated on serine and threonine residues. In terms of processing, palmitoylated via thioester bonds. These palmitoylations may induce disruption of the C-terminus transmembrane. This would result in the reorientation of E2 C-terminus from lumenal to cytoplasmic side. Post-translationally, N-glycosylated. Palmitoylated via thioester bonds.

It localises to the virion. Its subcellular location is the host cytoplasm. It is found in the host cell membrane. The protein localises to the host nucleus. The protein resides in the virion membrane. It catalyses the reaction Autocatalytic release of the core protein from the N-terminus of the togavirus structural polyprotein by hydrolysis of a -Trp-|-Ser- bond.. Forms an icosahedral capsid with a T=4 symmetry composed of 240 copies of the capsid protein surrounded by a lipid membrane through which penetrate 80 spikes composed of trimers of E1-E2 heterodimers. The capsid protein binds to the viral RNA genome at a site adjacent to a ribosome binding site for viral genome translation following genome release. Possesses a protease activity that results in its autocatalytic cleavage from the nascent structural protein. Following its self-cleavage, the capsid protein transiently associates with ribosomes, and within several minutes the protein binds to viral RNA and rapidly assembles into icosahedric core particles. The resulting nucleocapsid eventually associates with the cytoplasmic domain of the spike glycoprotein E2 at the cell membrane, leading to budding and formation of mature virions. In case of infection, new virions attach to target cells and after clathrin-mediated endocytosis their membrane fuses with the host endosomal membrane. This leads to the release of the nucleocapsid into the cytoplasm, followed by an uncoating event necessary for the genomic RNA to become accessible. The uncoating might be triggered by the interaction of capsid proteins with ribosomes. Binding of ribosomes would release the genomic RNA since the same region is genomic RNA-binding and ribosome-binding. Specifically inhibits interleukin-1 receptor-associated kinase 1/IRAK1-dependent signaling during viral entry, representing a means by which the alphaviruses may evade innate immune detection and activation prior to viral gene expression. Inhibits host transcription. Forms a tetrameric complex with XPO1/CRM1 and the nuclear import receptor importin. This complex blocks the central channel of host nuclear pores thereby inhibiting the receptor-mediated nuclear transport and thus the host mRNA and rRNA transcription. The inhibition of transcription is linked to a cytopathic effect on the host cell. In terms of biological role, provides the signal sequence for the translocation of the precursor of protein E3/E2 to the host endoplasmic reticulum. Furin-cleaved E3 remains associated with spike glycoprotein E1 and mediates pH protection of the latter during the transport via the secretory pathway. After virion release from the host cell, the assembly protein E3 is gradually released in the extracellular space. Its function is as follows. Plays a role in viral attachment to target host cell, by binding to the cell receptor. Synthesized as a p62 precursor which is processed by furin at the cell membrane just before virion budding, giving rise to E2-E1 heterodimer. The p62-E1 heterodimer is stable, whereas E2-E1 is unstable and dissociate at low pH. p62 is processed at the last step, presumably to avoid E1 fusion activation before its final export to cell surface. E2 C-terminus contains a transitory transmembrane that would be disrupted by palmitoylation, resulting in reorientation of the C-terminal tail from lumenal to cytoplasmic side. This step is critical since E2 C-terminus is involved in budding by interacting with capsid proteins. This release of E2 C-terminus in cytoplasm occurs lately in protein export, and precludes premature assembly of particles at the endoplasmic reticulum membrane. Functionally, constitutive membrane protein involved in virus glycoprotein processing, cell permeabilization, and the budding of viral particles. Disrupts the calcium homeostasis of the cell, probably at the endoplasmic reticulum level. This leads to cytoplasmic calcium elevation. Because of its lipophilic properties, the 6K protein is postulated to influence the selection of lipids that interact with the transmembrane domains of the glycoproteins, which, in turn, affects the deformability of the bilayer required for the extreme curvature that occurs as budding proceeds. Present in low amount in virions, about 3% compared to viral glycoproteins. Class II viral fusion protein. Fusion activity is inactive as long as E1 is bound to E2 in mature virion. After virus attachment to target cell and endocytosis, acidification of the endosome would induce dissociation of E1/E2 heterodimer and concomitant trimerization of the E1 subunits. This E1 trimer is fusion active, and promotes release of viral nucleocapsid in cytoplasm after endosome and viral membrane fusion. Efficient fusion requires the presence of cholesterol and sphingolipid in the target membrane. Fusion is optimal at levels of about 1 molecule of cholesterol per 2 molecules of phospholipids, and is specific for sterols containing a 3-beta-hydroxyl group. This chain is Structural polyprotein, found in Eastern equine encephalitis virus (strain va33[ten broeck]) (EEEV).